The primary structure comprises 312 residues: MEIIFYHQTFDTPFWIRELEKQLPGARVREWKAGDNQPADYALVWHPPVEMLQGRALKAVFALGAGVDSILSKLRDHPDMLPLSIPLFRLEDTGMGRQMQEYAVSQVLHWFRRFDDYQALKLASRWQPLPEYRADEFTVGIMGAGVLGAKVAESLQPWGFPLRVWSRSRKSWPQVQSFAGQAELGEFLQGTRVLINLLPNTAETAGIINQTLLAQLPDESYVLNLARGVHVVEEDLLAALNSGKLKGAMLDVFSREPLPQESPLWAHPRVAMTPHVAAVTRPMEAITYIAETISRLERGEPVSGQVDRQRGY.

Arginine 227 is a catalytic residue. The Proton donor role is filled by histidine 275.

It belongs to the D-isomer specific 2-hydroxyacid dehydrogenase family. GhrA subfamily.

The protein resides in the cytoplasm. The enzyme catalyses glycolate + NADP(+) = glyoxylate + NADPH + H(+). It catalyses the reaction (R)-glycerate + NAD(+) = 3-hydroxypyruvate + NADH + H(+). It carries out the reaction (R)-glycerate + NADP(+) = 3-hydroxypyruvate + NADPH + H(+). Its function is as follows. Catalyzes the NADPH-dependent reduction of glyoxylate and hydroxypyruvate into glycolate and glycerate, respectively. This is Glyoxylate/hydroxypyruvate reductase A from Klebsiella pneumoniae (strain 342).